The sequence spans 530 residues: FSD1-like protein (530 aa).

At Met1 the chain carries N-acetylmethionine. Positions Lys102 to Glu141 form a coiled coil. One can recognise a COS domain in the interval Leu137–Leu194. A Fibronectin type-III domain is found at Val196–Leu300. In terms of domain architecture, B30.2/SPRY spans Leu300–Ala506. The tract at residues Trp322–Arg366 is disordered. Over residues Gln330 to Gly341 the composition is skewed to basic and acidic residues. Polar residues predominate over residues Arg342 to Gly354. 2 positions are modified to phosphoserine: Ser520 and Ser523.

This Homo sapiens (Human) protein is FSD1-like protein (FSD1L).